The sequence spans 472 residues: Aspartyl/glutamyl-tRNA(Asn/Gln) amidotransferase subunit B (472 aa).

The protein belongs to the GatB/GatE family. GatB subfamily. In terms of assembly, heterotrimer of A, B and C subunits.

The catalysed reaction is L-glutamyl-tRNA(Gln) + L-glutamine + ATP + H2O = L-glutaminyl-tRNA(Gln) + L-glutamate + ADP + phosphate + H(+). It catalyses the reaction L-aspartyl-tRNA(Asn) + L-glutamine + ATP + H2O = L-asparaginyl-tRNA(Asn) + L-glutamate + ADP + phosphate + 2 H(+). Allows the formation of correctly charged Asn-tRNA(Asn) or Gln-tRNA(Gln) through the transamidation of misacylated Asp-tRNA(Asn) or Glu-tRNA(Gln) in organisms which lack either or both of asparaginyl-tRNA or glutaminyl-tRNA synthetases. The reaction takes place in the presence of glutamine and ATP through an activated phospho-Asp-tRNA(Asn) or phospho-Glu-tRNA(Gln). The chain is Aspartyl/glutamyl-tRNA(Asn/Gln) amidotransferase subunit B from Campylobacter jejuni (strain RM1221).